Here is a 752-residue protein sequence, read N- to C-terminus: Catalase-peroxidase (752 aa).

Residues 1–21 (MSNESKCPFHQTAGGGTTNRD) form a disordered region. The tryptophyl-tyrosyl-methioninium (Trp-Tyr) (with M-271) cross-link spans 91–245 (WHSAGTYRIG…LAAVQMGLIY (155 aa)). H92 serves as the catalytic Proton acceptor. The tract at residues 204 to 228 (QAPGQGDLVAEPAKHGEEQNRDLSA) is disordered. The segment covering 215–228 (PAKHGEEQNRDLSA) has biased composition (basic and acidic residues). The segment at residues 245–271 (YVNPEGPEGNPDPVASGKDIRETFGRM) is a cross-link (tryptophyl-tyrosyl-methioninium (Tyr-Met) (with W-91)). A heme-binding site is contributed by H286. The segment at 366-391 (AHQWQPKEGKGAGTVPDAHDPSKRHA) is disordered.

It belongs to the peroxidase family. Peroxidase/catalase subfamily. In terms of assembly, homodimer or homotetramer. Heme b is required as a cofactor. In terms of processing, formation of the three residue Trp-Tyr-Met cross-link is important for the catalase, but not the peroxidase activity of the enzyme.

It catalyses the reaction H2O2 + AH2 = A + 2 H2O. The catalysed reaction is 2 H2O2 = O2 + 2 H2O. Functionally, bifunctional enzyme with both catalase and broad-spectrum peroxidase activity. This Pseudomonas putida (strain W619) protein is Catalase-peroxidase.